An 89-amino-acid polypeptide reads, in one-letter code: NAD(P)H-quinone oxidoreductase subunit L (89 aa).

2 consecutive transmembrane segments (helical) span residues 29–46 and 59–79; these read VLGG…FYWM and LFIY…APFL.

Belongs to the complex I NdhL subunit family. As to quaternary structure, NDH-1 can be composed of about 15 different subunits; different subcomplexes with different compositions have been identified which probably have different functions.

The protein localises to the cellular thylakoid membrane. The enzyme catalyses a plastoquinone + NADH + (n+1) H(+)(in) = a plastoquinol + NAD(+) + n H(+)(out). It catalyses the reaction a plastoquinone + NADPH + (n+1) H(+)(in) = a plastoquinol + NADP(+) + n H(+)(out). Its function is as follows. NDH-1 shuttles electrons from an unknown electron donor, via FMN and iron-sulfur (Fe-S) centers, to quinones in the respiratory and/or the photosynthetic chain. The immediate electron acceptor for the enzyme in this species is believed to be plastoquinone. Couples the redox reaction to proton translocation, and thus conserves the redox energy in a proton gradient. Cyanobacterial NDH-1 also plays a role in inorganic carbon-concentration. This is NAD(P)H-quinone oxidoreductase subunit L from Prochlorococcus marinus (strain NATL1A).